The sequence spans 205 residues: Colicin-E8 (205 aa).

Disordered regions lie at residues 24 to 109 (AQTD…PDRI) and 136 to 187 (PELS…VYDM). 3 stretches are compositionally biased toward basic and acidic residues: residues 53 to 76 (QERR…ESKR), 88 to 99 (PVGDKWLDDAGK), and 159 to 178 (RNKD…DKPI). Positions 173, 198, and 202 each coordinate Zn(2+).

The protein belongs to the colicin/pyosin nuclease family.

This plasmid-coded bactericidal protein is an endonuclease active on both single- and double-stranded DNA but with undefined specificity. Functionally, colicins are polypeptide toxins produced by and active against E.coli and closely related bacteria. The sequence is that of Colicin-E8 (col) from Escherichia coli.